The chain runs to 139 residues: Hydrogenase maturation factor HypA (139 aa).

Residue His2 coordinates Ni(2+). Zn(2+) is bound by residues Cys73, Cys76, Cys110, and Cys113.

The protein belongs to the HypA/HybF family.

Its function is as follows. Involved in the maturation of [NiFe] hydrogenases. Required for nickel insertion into the metal center of the hydrogenase. This is Hydrogenase maturation factor HypA from Thermococcus gammatolerans (strain DSM 15229 / JCM 11827 / EJ3).